The primary structure comprises 263 residues: Oxygen-evolving enhancer protein 2, chloroplastic (263 aa).

A chloroplast-targeting transit peptide spans 1 to 78 (MAAASCFHAL…VGTKVSPADA (78 aa)). Residues 14-30 (ARSSSSSLQSSSSRLPA) show a composition bias toward low complexity. Residues 14-34 (ARSSSSSLQSSSSRLPAPIKP) are disordered.

Belongs to the PsbP family.

It localises to the plastid. Its subcellular location is the chloroplast thylakoid membrane. May be involved in the regulation of photosystem II. The chain is Oxygen-evolving enhancer protein 2, chloroplastic from Helianthus annuus (Common sunflower).